The sequence spans 304 residues: Bifunctional protein FolD 3 (304 aa).

Residues 172–174 (GRS), Ser-197, and Ile-238 each bind NADP(+).

This sequence belongs to the tetrahydrofolate dehydrogenase/cyclohydrolase family. Homodimer.

It carries out the reaction (6R)-5,10-methylene-5,6,7,8-tetrahydrofolate + NADP(+) = (6R)-5,10-methenyltetrahydrofolate + NADPH. The catalysed reaction is (6R)-5,10-methenyltetrahydrofolate + H2O = (6R)-10-formyltetrahydrofolate + H(+). It participates in one-carbon metabolism; tetrahydrofolate interconversion. In terms of biological role, catalyzes the oxidation of 5,10-methylenetetrahydrofolate to 5,10-methenyltetrahydrofolate and then the hydrolysis of 5,10-methenyltetrahydrofolate to 10-formyltetrahydrofolate. This Rhizorhabdus wittichii (strain DSM 6014 / CCUG 31198 / JCM 15750 / NBRC 105917 / EY 4224 / RW1) (Sphingomonas wittichii) protein is Bifunctional protein FolD 3.